Consider the following 306-residue polypeptide: Lipoyl synthase (306 aa).

Residues cysteine 52, cysteine 57, cysteine 63, cysteine 78, cysteine 82, cysteine 85, and serine 289 each contribute to the [4Fe-4S] cluster site. One can recognise a Radical SAM core domain in the interval 64–278 (WNRKTATYML…KETAYKIGFK (215 aa)).

Belongs to the radical SAM superfamily. Lipoyl synthase family. Requires [4Fe-4S] cluster as cofactor.

It is found in the cytoplasm. The enzyme catalyses [[Fe-S] cluster scaffold protein carrying a second [4Fe-4S](2+) cluster] + N(6)-octanoyl-L-lysyl-[protein] + 2 oxidized [2Fe-2S]-[ferredoxin] + 2 S-adenosyl-L-methionine + 4 H(+) = [[Fe-S] cluster scaffold protein] + N(6)-[(R)-dihydrolipoyl]-L-lysyl-[protein] + 4 Fe(3+) + 2 hydrogen sulfide + 2 5'-deoxyadenosine + 2 L-methionine + 2 reduced [2Fe-2S]-[ferredoxin]. The protein operates within protein modification; protein lipoylation via endogenous pathway; protein N(6)-(lipoyl)lysine from octanoyl-[acyl-carrier-protein]: step 2/2. Its function is as follows. Catalyzes the radical-mediated insertion of two sulfur atoms into the C-6 and C-8 positions of the octanoyl moiety bound to the lipoyl domains of lipoate-dependent enzymes, thereby converting the octanoylated domains into lipoylated derivatives. The polypeptide is Lipoyl synthase (Leptospira biflexa serovar Patoc (strain Patoc 1 / Ames)).